A 65-amino-acid polypeptide reads, in one-letter code: Small ribosomal subunit protein eS17 (65 aa).

The protein belongs to the eukaryotic ribosomal protein eS17 family.

The chain is Small ribosomal subunit protein eS17 from Archaeoglobus fulgidus (strain ATCC 49558 / DSM 4304 / JCM 9628 / NBRC 100126 / VC-16).